Reading from the N-terminus, the 197-residue chain is ATP-dependent Clp protease proteolytic subunit (197 aa).

The Nucleophile role is filled by S98. Residue H123 is part of the active site.

Belongs to the peptidase S14 family. Fourteen ClpP subunits assemble into 2 heptameric rings which stack back to back to give a disk-like structure with a central cavity, resembling the structure of eukaryotic proteasomes.

It localises to the cytoplasm. It carries out the reaction Hydrolysis of proteins to small peptides in the presence of ATP and magnesium. alpha-casein is the usual test substrate. In the absence of ATP, only oligopeptides shorter than five residues are hydrolyzed (such as succinyl-Leu-Tyr-|-NHMec, and Leu-Tyr-Leu-|-Tyr-Trp, in which cleavage of the -Tyr-|-Leu- and -Tyr-|-Trp bonds also occurs).. Cleaves peptides in various proteins in a process that requires ATP hydrolysis. Has a chymotrypsin-like activity. Plays a major role in the degradation of misfolded proteins. The protein is ATP-dependent Clp protease proteolytic subunit of Pediococcus pentosaceus (strain ATCC 25745 / CCUG 21536 / LMG 10740 / 183-1w).